Reading from the N-terminus, the 423-residue chain is Mannose-6-phosphate isomerase (423 aa).

At Ala2 the chain carries N-acetylalanine. 2 positions are modified to phosphoserine: Ser102 and Ser108. Residues Gln110, His112, Glu137, and His276 each coordinate Zn(2+). Arg295 is an active-site residue.

The protein belongs to the mannose-6-phosphate isomerase type 1 family. It depends on Zn(2+) as a cofactor.

The protein localises to the cytoplasm. It carries out the reaction D-mannose 6-phosphate = D-fructose 6-phosphate. Its pathway is nucleotide-sugar biosynthesis; GDP-alpha-D-mannose biosynthesis; alpha-D-mannose 1-phosphate from D-fructose 6-phosphate: step 1/2. In terms of biological role, isomerase that catalyzes the interconversion of fructose-6-P and mannose-6-P and has a critical role in the supply of D-mannose derivatives required for many eukaryotic glycosylation reactions. This chain is Mannose-6-phosphate isomerase (MPI), found in Macaca fascicularis (Crab-eating macaque).